The primary structure comprises 1103 residues: Retinal guanylyl cyclase 2 (1103 aa).

The N-terminal stretch at 1-46 is a signal peptide; it reads MFLAPWPFSHLMLWFVTLGRQRGQHGLASFKLLWCLWLLVLMSLPL. Residues 47–465 lie on the Extracellular side of the membrane; it reads QVWAPPYKIG…DGRICQGGIN (419 aa). Cysteine 104 and cysteine 132 are oxidised to a cystine. A helical membrane pass occupies residues 466–490; it reads PTFALMVCLALLIALLSINGFAYFI. Topologically, residues 491–1103 are cytoplasmic; it reads RHRINKIQLI…FQRRKQKSSW (613 aa). Residues 532-812 form the Protein kinase domain; the sequence is FQITSEVQSG…DEIFNQFKTF (281 aa). Positions 884 to 1014 constitute a Guanylate cyclase domain; that stretch reads TLYFSDIVGF…DTVNTASRME (131 aa).

This sequence belongs to the adenylyl cyclase class-4/guanylyl cyclase family. As to quaternary structure, homodimer. Interacts with RD3; promotes the exit of GUCY2F from the endoplasmic reticulum and its trafficking to the photoreceptor outer segments. In terms of processing, there are 9 conserved cysteine residues in sensory guanylate cyclases, 6 in the extracellular domain, which may be involved in intra- or interchain disulfide bonds. As to expression, expressed specifically in retina.

The protein resides in the membrane. The protein localises to the photoreceptor outer segment membrane. The enzyme catalyses GTP = 3',5'-cyclic GMP + diphosphate. Its activity is regulated as follows. Activated by GUCA1B when free calcium ions concentration is low, and inhibited by GUCA1B when free calcium ions concentration is high. Inhibited by RD3. Responsible for the synthesis of cyclic GMP (cGMP) in rods and cones of photoreceptors. Plays an essential role in phototransduction, by mediating cGMP replenishment. May also participate in the trafficking of membrane-asociated proteins to the photoreceptor outer segment membrane. The protein is Retinal guanylyl cyclase 2 (GUCY2F) of Bos taurus (Bovine).